Here is a 1675-residue protein sequence, read N- to C-terminus: Clathrin heavy chain 1 (1675 aa).

Position 2 is an N-acetylalanine (Ala-2). The globular terminal domain stretch occupies residues 2–479 (AQILPIRFQE…VDPTLALSVY (478 aa)). WD40-like repeat stretches follow at residues 24–67 (NIGF…RPIS), 68–107 (ADSA…MTDD), 108–149 (VTFW…SSLA), 150–195 (GCQI…QPIE), 196–257 (GHAA…PEAQ), 258–301 (NDFP…ISGE), and 302–330 (TIFV…VCVE). Ser-67 is modified (phosphoserine). Thr-105 is subject to Phosphothreonine. Position 184 is a phosphotyrosine (Tyr-184). Thr-394 carries the post-translational modification Phosphothreonine. The binding site for the uncoating ATPase, involved in lattice disassembly stretch occupies residues 449 to 465 (EKWLKEDKLECSEELGD). The tract at residues 480–523 (LRANVPNKVIQCFAETGQVQKIVLYAKKVGYTPDWIFLLRNVMR) is flexible linker. The distal segment stretch occupies residues 524 to 634 (ISPDQGQQFA…RALEHFTDLY (111 aa)). Positions 524 to 1675 (ISPDQGQQFA…QPQPGFGYSM (1152 aa)) are heavy chain arm. CHCR repeat units lie at residues 537 to 683 (VQDE…QIWV), 686 to 828 (ASKY…SEDV), 833 to 972 (ILVV…PLID), 979 to 1124 (LSET…VKEA), 1128 to 1269 (YIKA…FRLA), 1274 to 1420 (LHIV…LLLN), and 1423 to 1566 (LMVL…RECF). Phosphotyrosine is present on Tyr-634. Residues 639 to 1675 (AVVHTHLLNP…QPQPGFGYSM (1037 aa)) are proximal segment. At Lys-737 the chain carries N6-succinyllysine. At Lys-856 the chain carries N6-acetyllysine. At Tyr-899 the chain carries Phosphotyrosine. A Phosphoserine modification is found at Ser-1167. Phosphotyrosine is present on Tyr-1206. The involved in binding clathrin light chain stretch occupies residues 1213–1522 (AAKLLYNNVS…YLFKGNNRWK (310 aa)). Ser-1229 is modified (phosphoserine). At Lys-1441 the chain carries N6-acetyllysine; alternate. Position 1441 is an N6-succinyllysine; alternate (Lys-1441). Tyr-1477 and Tyr-1487 each carry phosphotyrosine. A Phosphoserine modification is found at Ser-1494. Lys-1501 carries the post-translational modification N6-acetyllysine. A trimerization region spans residues 1550–1675 (AEELLQWFLQ…QPQPGFGYSM (126 aa)).

This sequence belongs to the clathrin heavy chain family. As to quaternary structure, clathrin triskelions, composed of 3 heavy chains and 3 light chains, are the basic subunits of the clathrin coat. In the presence of light chains, hub assembly is influenced by both the pH and the concentration of calcium. Interacts with HIP1. Interacts with DENND1A, DENND1B and DENND1C. Interacts with OCRL. Interacts with ERBB2. Interacts with FKBP6. Interacts with CKAP5 and TACC3 forming the TACC3/ch-TOG/clathrin complex located at spindle inter-microtubules bridges; the complex implicates clathrin triskelions; TACC3 and CLTC are proposed to form a composite microtubule interaction surface. Interacts with ATG16L1 (via N-terminus). Interacts with RFTN1; the interaction occurs in response to pathogens. Interacts with USP2 isoform 2. Interacts with TMEM106B (via N-terminus). Interacts with DNAJC6; this interaction produces a local change in heavy-chain contacts, creating a detectable global distortion of the clathrin coat and leads to the recruitment of HSPA8.

It localises to the cytoplasmic vesicle membrane. The protein resides in the membrane. The protein localises to the coated pit. It is found in the melanosome. Its subcellular location is the cytoplasm. It localises to the cytoskeleton. The protein resides in the spindle. Clathrin is the major protein of the polyhedral coat of coated pits and vesicles. Two different adapter protein complexes link the clathrin lattice either to the plasma membrane or to the trans-Golgi network. Acts as a component of the TACC3/ch-TOG/clathrin complex proposed to contribute to stabilization of kinetochore fibers of the mitotic spindle by acting as inter-microtubule bridge. The TACC3/ch-TOG/clathrin complex is required for the maintenance of kinetochore fiber tension. Plays a role in early autophagosome formation. Interaction with DNAJC6 mediates the recruitment of HSPA8 to the clathrin lattice and creates local destabilization of the lattice promoting uncoating. The sequence is that of Clathrin heavy chain 1 from Rattus norvegicus (Rat).